Consider the following 322-residue polypeptide: Putative small RNA degrading nuclease 4 (322 aa).

The region spanning 75-213 is the Exonuclease domain; that stretch reads MLALDCEMVL…HDAAAAMKLA (139 aa).

It belongs to the REXO1/REXO3 family.

It is found in the nucleus. In terms of biological role, putative 3'-5' exonuclease degrading single-stranded small RNAs. The chain is Putative small RNA degrading nuclease 4 (SDN4) from Arabidopsis thaliana (Mouse-ear cress).